Here is a 282-residue protein sequence, read N- to C-terminus: Short-chain dehydrogenase/reductase prx7 (282 aa).

Asn-23, Asn-70, Tyr-150, Lys-154, Val-183, and Thr-185 together coordinate NADP(+). The Proton acceptor role is filled by Tyr-150. The Lowers pKa of active site Tyr role is filled by Lys-154.

The protein belongs to the short-chain dehydrogenases/reductases (SDR) family.

The protein operates within sesquiterpene biosynthesis. Short-chain dehydrogenase/reductase; part of the gene cluster that mediates the biosynthesis of PR-toxin, a bicyclic sesquiterpene belonging to the eremophilane class and acting as a mycotoxin. The first step of the pathway is catalyzed by the aristolochene synthase which performs the cyclization of trans,trans-farnesyl diphosphate (FPP) to the bicyclic sesquiterpene aristolochene. Following the formation of aristolochene, the non-oxygenated aristolochene is converted to the trioxygenated intermediate eremofortin B, via 7-epi-neopetasone. This conversion appears to involve three enzymes, a hydroxysterol oxidase-like enzyme, the quinone-oxidase prx3 that forms the quinone-type-structure in the bicyclic nucleus of aristolochene with the C8-oxo group and the C-3 hydroxyl group, and the P450 monooxygenase prx9 that introduces the epoxide at the double bond between carbons 1 and 2. No monoxy or dioxy-intermediates have been reported to be released to the broth, so these three early oxidative reactions may be coupled together. Eremofortin B is further oxidized by another P450 monooxygenase, that introduces a second epoxide between carbons 7 and 11 prior to acetylation to eremofortin A by the acetyltransferase prx11. The second epoxidation may be performed by a second P450 monooxygenase. After the acetylation step, eremofortin A is converted to eremofortin C and then to PR-toxin. First the conversion of eremofortin A to eremofortin C proceeds by oxidation of the side chain of the molecule at C-12 and is catalyzed by the short-chain oxidoreductase prx1. The cytochrome P450 monooxygenase prx8 also plays a role in this step. The primary alcohol formed at C-12 is finally oxidized by the short-chain alcohol dehydrogenase prx4 that forms PR-toxin. The chain is Short-chain dehydrogenase/reductase prx7 from Penicillium rubens (strain ATCC 28089 / DSM 1075 / NRRL 1951 / Wisconsin 54-1255) (Penicillium chrysogenum).